The chain runs to 303 residues: Bifunctional protein FolD 2 (303 aa).

NADP(+)-binding positions include 169-171, S194, and I235; that span reads GRS.

Belongs to the tetrahydrofolate dehydrogenase/cyclohydrolase family. As to quaternary structure, homodimer.

It carries out the reaction (6R)-5,10-methylene-5,6,7,8-tetrahydrofolate + NADP(+) = (6R)-5,10-methenyltetrahydrofolate + NADPH. The enzyme catalyses (6R)-5,10-methenyltetrahydrofolate + H2O = (6R)-10-formyltetrahydrofolate + H(+). Its pathway is one-carbon metabolism; tetrahydrofolate interconversion. Functionally, catalyzes the oxidation of 5,10-methylenetetrahydrofolate to 5,10-methenyltetrahydrofolate and then the hydrolysis of 5,10-methenyltetrahydrofolate to 10-formyltetrahydrofolate. This is Bifunctional protein FolD 2 from Pseudomonas putida (strain GB-1).